We begin with the raw amino-acid sequence, 325 residues long: UPF0285 protein MM_0679 (325 aa).

It belongs to the UPF0285 family.

This Methanosarcina mazei (strain ATCC BAA-159 / DSM 3647 / Goe1 / Go1 / JCM 11833 / OCM 88) (Methanosarcina frisia) protein is UPF0285 protein MM_0679.